The following is a 207-amino-acid chain: Outer-membrane lipoprotein carrier protein (207 aa).

Residues 1 to 21 (MRAIRMLLVSALTLGSVTAYA) form the signal peptide.

This sequence belongs to the LolA family. In terms of assembly, monomer.

It localises to the periplasm. Its function is as follows. Participates in the translocation of lipoproteins from the inner membrane to the outer membrane. Only forms a complex with a lipoprotein if the residue after the N-terminal Cys is not an aspartate (The Asp acts as a targeting signal to indicate that the lipoprotein should stay in the inner membrane). In Pseudomonas putida (strain ATCC 47054 / DSM 6125 / CFBP 8728 / NCIMB 11950 / KT2440), this protein is Outer-membrane lipoprotein carrier protein.